A 157-amino-acid chain; its full sequence is Ribosome maturation factor RimP (157 aa).

This sequence belongs to the RimP family.

The protein resides in the cytoplasm. Its function is as follows. Required for maturation of 30S ribosomal subunits. This Synechococcus sp. (strain CC9311) protein is Ribosome maturation factor RimP.